We begin with the raw amino-acid sequence, 1034 residues long: Beta-galactosidase (1034 aa).

The active-site Proton donor is the E481. The active-site Nucleophile is the E547.

This sequence belongs to the glycosyl hydrolase 2 family.

The catalysed reaction is Hydrolysis of terminal non-reducing beta-D-galactose residues in beta-D-galactosides.. This Priestia megaterium (strain DSM 319 / IMG 1521) (Bacillus megaterium) protein is Beta-galactosidase (bgaM).